We begin with the raw amino-acid sequence, 177 residues long: Small ribosomal subunit protein uS5 (177 aa).

Residues 14–77 enclose the S5 DRBM domain; the sequence is LQEKLITVNR…EKARHNMIDI (64 aa).

This sequence belongs to the universal ribosomal protein uS5 family. Part of the 30S ribosomal subunit. Contacts proteins S4 and S8.

Its function is as follows. With S4 and S12 plays an important role in translational accuracy. Functionally, located at the back of the 30S subunit body where it stabilizes the conformation of the head with respect to the body. This Blochmanniella floridana protein is Small ribosomal subunit protein uS5.